A 252-amino-acid chain; its full sequence is 5'-nucleotidase SurE (252 aa).

A divalent metal cation is bound by residues aspartate 8, aspartate 9, serine 39, and asparagine 95.

Belongs to the SurE nucleotidase family. It depends on a divalent metal cation as a cofactor.

The protein localises to the cytoplasm. It carries out the reaction a ribonucleoside 5'-phosphate + H2O = a ribonucleoside + phosphate. In terms of biological role, nucleotidase that shows phosphatase activity on nucleoside 5'-monophosphates. This is 5'-nucleotidase SurE from Clostridium botulinum (strain Loch Maree / Type A3).